Here is a 380-residue protein sequence, read N- to C-terminus: Anhydro-N-acetylmuramic acid kinase (380 aa).

ATP is bound at residue Gly-9–Asp-16.

Belongs to the anhydro-N-acetylmuramic acid kinase family.

The enzyme catalyses 1,6-anhydro-N-acetyl-beta-muramate + ATP + H2O = N-acetyl-D-muramate 6-phosphate + ADP + H(+). It participates in amino-sugar metabolism; 1,6-anhydro-N-acetylmuramate degradation. It functions in the pathway cell wall biogenesis; peptidoglycan recycling. In terms of biological role, catalyzes the specific phosphorylation of 1,6-anhydro-N-acetylmuramic acid (anhMurNAc) with the simultaneous cleavage of the 1,6-anhydro ring, generating MurNAc-6-P. Is required for the utilization of anhMurNAc either imported from the medium or derived from its own cell wall murein, and thus plays a role in cell wall recycling. This Cyanothece sp. (strain PCC 7425 / ATCC 29141) protein is Anhydro-N-acetylmuramic acid kinase.